A 230-amino-acid chain; its full sequence is Large ribosomal subunit protein uL1 (230 aa).

This sequence belongs to the universal ribosomal protein uL1 family. Part of the 50S ribosomal subunit.

Functionally, binds directly to 23S rRNA. The L1 stalk is quite mobile in the ribosome, and is involved in E site tRNA release. Protein L1 is also a translational repressor protein, it controls the translation of the L11 operon by binding to its mRNA. In Bifidobacterium longum subsp. infantis (strain ATCC 15697 / DSM 20088 / JCM 1222 / NCTC 11817 / S12), this protein is Large ribosomal subunit protein uL1.